We begin with the raw amino-acid sequence, 209 residues long: Uracil phosphoribosyltransferase (209 aa).

5-phospho-alpha-D-ribose 1-diphosphate-binding positions include arginine 79, arginine 104, and aspartate 131–serine 139. Residues isoleucine 194 and glycine 199 to alanine 201 each bind uracil. Residue aspartate 200 coordinates 5-phospho-alpha-D-ribose 1-diphosphate.

It belongs to the UPRTase family. Requires Mg(2+) as cofactor.

The catalysed reaction is UMP + diphosphate = 5-phospho-alpha-D-ribose 1-diphosphate + uracil. The protein operates within pyrimidine metabolism; UMP biosynthesis via salvage pathway; UMP from uracil: step 1/1. Allosterically activated by GTP. Catalyzes the conversion of uracil and 5-phospho-alpha-D-ribose 1-diphosphate (PRPP) to UMP and diphosphate. The sequence is that of Uracil phosphoribosyltransferase from Acidovorax ebreus (strain TPSY) (Diaphorobacter sp. (strain TPSY)).